We begin with the raw amino-acid sequence, 206 residues long: Guanylate kinase (206 aa).

Positions 5 to 183 (FNLLILSGPS…SKEIILSIAK (179 aa)) constitute a Guanylate kinase-like domain. 12–19 (GPSGAGKS) serves as a coordination point for ATP.

The protein belongs to the guanylate kinase family.

Its subcellular location is the cytoplasm. It catalyses the reaction GMP + ATP = GDP + ADP. In terms of biological role, essential for recycling GMP and indirectly, cGMP. This Helicobacter pylori (strain ATCC 700392 / 26695) (Campylobacter pylori) protein is Guanylate kinase (gmk).